A 442-amino-acid chain; its full sequence is UDP-N-acetylmuramate--L-alanine ligase (442 aa).

Residue 109–115 (GAHGKTS) participates in ATP binding.

This sequence belongs to the MurCDEF family.

It localises to the cytoplasm. It catalyses the reaction UDP-N-acetyl-alpha-D-muramate + L-alanine + ATP = UDP-N-acetyl-alpha-D-muramoyl-L-alanine + ADP + phosphate + H(+). It functions in the pathway cell wall biogenesis; peptidoglycan biosynthesis. Its function is as follows. Cell wall formation. The chain is UDP-N-acetylmuramate--L-alanine ligase from Streptococcus pyogenes serotype M49 (strain NZ131).